The primary structure comprises 213 residues: GTP cyclohydrolase 1 (213 aa).

Cys-104, His-107, and Cys-175 together coordinate Zn(2+).

It belongs to the GTP cyclohydrolase I family. Toroid-shaped homodecamer, composed of two pentamers of five dimers.

The catalysed reaction is GTP + H2O = 7,8-dihydroneopterin 3'-triphosphate + formate + H(+). The protein operates within cofactor biosynthesis; 7,8-dihydroneopterin triphosphate biosynthesis; 7,8-dihydroneopterin triphosphate from GTP: step 1/1. The polypeptide is GTP cyclohydrolase 1 (Brucella anthropi (strain ATCC 49188 / DSM 6882 / CCUG 24695 / JCM 21032 / LMG 3331 / NBRC 15819 / NCTC 12168 / Alc 37) (Ochrobactrum anthropi)).